Reading from the N-terminus, the 320-residue chain is uncharacterized protein (320 aa).

The protein belongs to the NAD(P)-dependent epimerase/dehydratase family.

This is an uncharacterized protein from Staphylococcus saprophyticus subsp. saprophyticus (strain ATCC 15305 / DSM 20229 / NCIMB 8711 / NCTC 7292 / S-41).